The chain runs to 122 residues: Transcription initiation factor IIA subunit 2 (122 aa).

Phosphoserine occurs at positions 95 and 102.

Belongs to the TFIIA subunit 2 family. In terms of assembly, TFIIA is a heterodimer composed of the large TOA1 and a small TOA2 subunits. Interacts with TBP. Interacts with TAF11. Interacts with KAP122.

The protein localises to the cytoplasm. It localises to the nucleus. TFIIA is a component of the transcription machinery of RNA polymerase II and plays an important role in transcriptional activation. TFIIA in a complex with TBP mediates transcriptional activity. The polypeptide is Transcription initiation factor IIA subunit 2 (TOA2) (Saccharomyces cerevisiae (strain ATCC 204508 / S288c) (Baker's yeast)).